The primary structure comprises 410 residues: Serine hydroxymethyltransferase (410 aa).

(6S)-5,6,7,8-tetrahydrofolate contacts are provided by residues Leu116 and 120–122; that span reads GHL. Lys225 is modified (N6-(pyridoxal phosphate)lysine).

The protein belongs to the SHMT family. In terms of assembly, homodimer. The cofactor is pyridoxal 5'-phosphate.

It localises to the cytoplasm. It carries out the reaction (6R)-5,10-methylene-5,6,7,8-tetrahydrofolate + glycine + H2O = (6S)-5,6,7,8-tetrahydrofolate + L-serine. It functions in the pathway one-carbon metabolism; tetrahydrofolate interconversion. It participates in amino-acid biosynthesis; glycine biosynthesis; glycine from L-serine: step 1/1. Functionally, catalyzes the reversible interconversion of serine and glycine with tetrahydrofolate (THF) serving as the one-carbon carrier. This reaction serves as the major source of one-carbon groups required for the biosynthesis of purines, thymidylate, methionine, and other important biomolecules. Also exhibits THF-independent aldolase activity toward beta-hydroxyamino acids, producing glycine and aldehydes, via a retro-aldol mechanism. This is Serine hydroxymethyltransferase from Lacticaseibacillus casei (strain BL23) (Lactobacillus casei).